Here is a 253-residue protein sequence, read N- to C-terminus: Proteasome subunit alpha type-7 (253 aa).

It belongs to the peptidase T1A family. In terms of assembly, the 26S proteasome consists of a 20S proteasome core and two 19S regulatory subunits. The 20S proteasome core is composed of 28 subunits that are arranged in four stacked rings, resulting in a barrel-shaped structure. The two end rings are each formed by seven alpha subunits, and the two central rings are each formed by seven beta subunits. The catalytic chamber with the active sites is on the inside of the barrel.

Its subcellular location is the cytoplasm. The protein localises to the nucleus. In terms of biological role, the proteasome is a multicatalytic proteinase complex which is characterized by its ability to cleave peptides with Arg, Phe, Tyr, Leu, and Glu adjacent to the leaving group at neutral or slightly basic pH. The proteasome has an ATP-dependent proteolytic activity. The protein is Proteasome subunit alpha type-7 (pas-4) of Caenorhabditis elegans.